A 223-amino-acid chain; its full sequence is MDTAVVYADLHLARTGEPKHKSPPSLSPDTCQCPRWHRLALKLGCACLILLVLSVIGLGVLVLTLLQKPLIQNSPADVQENRTKTTDSPTKLKCPKDWHSHQDKCFHVSQAPNTWNKSLADCGGKGATLLLIQDQEELRFLRNLTKGKDRSFWIGLNYTLPDKNWKWINSSTLNSDVLSIFGDTKQNSCASISQDKVLSESCDSDNLWICQKELKCECMCNGS.

Residues 1-45 (MDTAVVYADLHLARTGEPKHKSPPSLSPDTCQCPRWHRLALKLGC) lie on the Cytoplasmic side of the membrane. An ITIM motif motif is present at residues 5-10 (VVYADL). The LCK-binding motif motif lies at 31–34 (CQCP). The chain crosses the membrane as a helical; Signal-anchor for type II membrane protein span at residues 46 to 66 (ACLILLVLSVIGLGVLVLTLL). Residues 67 to 223 (QKPLIQNSPA…LKCECMCNGS (157 aa)) lie on the Extracellular side of the membrane. The C-type lectin domain occupies 101–211 (HQDKCFHVSQ…CDSDNLWICQ (111 aa)). 2 cysteine pairs are disulfide-bonded: cysteine 122–cysteine 210 and cysteine 189–cysteine 202.

In terms of assembly, homodimer; disulfide-linked. Interacts with tyrosine kinase LCK. Binds PTPN6/SHP-1 in a phosphorylation-dependent manner. In terms of tissue distribution, expressed in a subset of natural killer cells.

It is found in the membrane. Functionally, receptor for CLEC2D/OCIL. Ligand-binding contributes to inhibition of cytotoxic natural killer (NK) cells. May mediate MHC class I-independent 'missing-self' recognition of allografts, tumor cells and virus-infected cells. This Rattus norvegicus (Rat) protein is Killer cell lectin-like receptor subfamily B member 1B allele B.